We begin with the raw amino-acid sequence, 132 residues long: Small ribosomal subunit protein uS8 (132 aa).

This sequence belongs to the universal ribosomal protein uS8 family. As to quaternary structure, part of the 30S ribosomal subunit. Contacts proteins S5 and S12.

In terms of biological role, one of the primary rRNA binding proteins, it binds directly to 16S rRNA central domain where it helps coordinate assembly of the platform of the 30S subunit. The sequence is that of Small ribosomal subunit protein uS8 from Leuconostoc mesenteroides subsp. mesenteroides (strain ATCC 8293 / DSM 20343 / BCRC 11652 / CCM 1803 / JCM 6124 / NCDO 523 / NBRC 100496 / NCIMB 8023 / NCTC 12954 / NRRL B-1118 / 37Y).